Consider the following 150-residue polypeptide: Copper transporter 3 (150 aa).

The next 2 helical transmembrane spans lie at 50-70 (GGMYALALAAVFALAVLLEFL) and 100-120 (LAYLLMLALMSFNVGVLLAAV).

Belongs to the copper transporter (Ctr) (TC 1.A.56) family. SLC31A subfamily.

The protein resides in the membrane. Its function is as follows. Involved in the transport of copper. This Oryza sativa subsp. japonica (Rice) protein is Copper transporter 3 (COPT3).